The chain runs to 139 residues: Large ribosomal subunit protein uL22 (139 aa).

Residues Met1–Asp22 form a disordered region. The span at Arg9–Arg18 shows a compositional bias: basic residues.

This sequence belongs to the universal ribosomal protein uL22 family. Part of the 50S ribosomal subunit.

This protein binds specifically to 23S rRNA; its binding is stimulated by other ribosomal proteins, e.g. L4, L17, and L20. It is important during the early stages of 50S assembly. It makes multiple contacts with different domains of the 23S rRNA in the assembled 50S subunit and ribosome. In terms of biological role, the globular domain of the protein is located near the polypeptide exit tunnel on the outside of the subunit, while an extended beta-hairpin is found that lines the wall of the exit tunnel in the center of the 70S ribosome. The chain is Large ribosomal subunit protein uL22 from Pseudothermotoga lettingae (strain ATCC BAA-301 / DSM 14385 / NBRC 107922 / TMO) (Thermotoga lettingae).